The chain runs to 398 residues: S-adenosylmethionine synthase (398 aa).

136–141 (GTGSSD) lines the ATP pocket.

Belongs to the AdoMet synthase 2 family. Mg(2+) is required as a cofactor.

It carries out the reaction L-methionine + ATP + H2O = S-adenosyl-L-methionine + phosphate + diphosphate. It functions in the pathway amino-acid biosynthesis; S-adenosyl-L-methionine biosynthesis; S-adenosyl-L-methionine from L-methionine: step 1/1. Its function is as follows. Catalyzes the formation of S-adenosylmethionine from methionine and ATP. This is S-adenosylmethionine synthase from Methanosarcina mazei (strain ATCC BAA-159 / DSM 3647 / Goe1 / Go1 / JCM 11833 / OCM 88) (Methanosarcina frisia).